The following is a 522-amino-acid chain: MASGGGGCSASERLPPPFPGLEPESEGAVGGSEPEAGDSDTEGEDIFTGAAAVSKPQSPKRIASLLPINSGSKENGIHEEQDQEPQDLFADATVELSLDSTQNNQKKVPAKTLISLPPQEATNSSKPQPSYEELEEEEQEDQFDLTVGITDPEKIGDGMNAYVAYKVTTQTSLPMFRSKHFAVKRRFSDFLGLYEKLSEKHSQNGFIVPPPPEKSLIGMTKVKVGKEDSSSAEFLEKRRAALERYLQRIVNHPTMLQDPDVREFLEKEELPRAVGTQTLSGAGLLKMFNKATDAVSKMTINMNESDIWFEEKLQEVECEEQRLRKLHAVVETLVNHRKELALNTAQFAKSLAMLGSSEDNTALSRALSQLAEVEEKIEQLHQEQANNDFFLLAELLSDYIRLLAIVRAAFDQRMKTWQRWQDAQTTLQKKREAEARLLWANKPDKLQQAKDEIVEWESRVTQYERDFERISTVVRKEVIRFEKEKSRDFRNHVIQYLETLLHSQQQLAKYWEAFLPEAKAIS.

Residues 1–142 (MASGGGGCSA…ELEEEEQEDQ (142 aa)) form a disordered region. Residues serine 32 and serine 39 each carry the phosphoserine modification. The segment covering 35 to 45 (EAGDSDTEGED) has biased composition (acidic residues). A phosphothreonine mark is found at threonine 41 and threonine 48. Serine 58 and serine 72 each carry phosphoserine. Residues 132–142 (EELEEEEQEDQ) are compositionally biased toward acidic residues. Residues 143 to 272 (FDLTVGITDP…EFLEKEELPR (130 aa)) enclose the PX domain. Arginine 186, serine 188, and lysine 214 together coordinate a 1,2-diacyl-sn-glycero-3-phospho-(1D-myo-inositol-3-phosphate). Phosphoserine is present on serine 188. N6-acetyllysine is present on lysine 237. Arginine 238 contributes to the a 1,2-diacyl-sn-glycero-3-phospho-(1D-myo-inositol-3-phosphate) binding site. Serine 280 is subject to Phosphoserine. The segment at 281 to 298 (GAGLLKMFNKATDAVSKM) is membrane-binding amphipathic helix. One can recognise a BAR domain in the interval 302 to 522 (MNESDIWFEE…AFLPEAKAIS (221 aa)).

Belongs to the sorting nexin family. As to quaternary structure, predominantly forms heterodimers with BAR domain-containing sorting nexins SNX5, SNX6 and SNX32; can self-associate to form homodimers. The heterodimers are proposed to self-assemble into helical arrays on the membrane to stabilize and expand local membrane curvature underlying endosomal tubule formation. Thought to be a component of the originally described retromer complex (also called SNX-BAR retromer) which is a pentamer containing the heterotrimeric retromer cargo-selective complex (CSC), also described as vacuolar protein sorting subcomplex (VPS) and a heterodimeric membrane-deforming subcomplex formed between SNX1 or SNX2 and SNX5 or SNX6 (also called SNX-BAR subcomplex); the respective CSC and SNX-BAR subcomplexes associate with low affinity. Interacts with SNX5, SNX6, SNX32, VPS26A, VPS29, VPS35, DRD5, DENND5A, KALRN, RHOG (GDP-bound form). The interaction with SNX2 is reported controversially. Interacts with DNAJC13; prevented by presence of HGS. Interacts with HGS.

It is found in the endosome membrane. It localises to the golgi apparatus. Its subcellular location is the trans-Golgi network membrane. The protein resides in the early endosome membrane. The protein localises to the cell projection. It is found in the lamellipodium. Functionally, involved in several stages of intracellular trafficking. Interacts with membranes containing phosphatidylinositol 3-phosphate (PtdIns(3P)) or phosphatidylinositol 3,5-bisphosphate (PtdIns(3,5)P2). Acts in part as component of the retromer membrane-deforming SNX-BAR subcomplex. The SNX-BAR retromer mediates retrograde transport of cargo proteins from endosomes to the trans-Golgi network (TGN) and is involved in endosome-to-plasma membrane transport for cargo protein recycling. The SNX-BAR subcomplex functions to deform the donor membrane into a tubular profile called endosome-to-TGN transport carrier (ETC). Can sense membrane curvature and has in vitro vesicle-to-membrane remodeling activity. Involved in retrograde endosome-to-TGN transport of lysosomal enzyme receptors (IGF2R, M6PR and SORT1). Plays a role in targeting ligand-activated EGFR to the lysosomes for degradation after endocytosis from the cell surface and release from the Golgi. Involvement in retromer-independent endocytic trafficking of P2RY1 and lysosomal degradation of protease-activated receptor-1/F2R. Promotes KALRN- and RHOG-dependent but retromer-independent membrane remodeling such as lamellipodium formation; the function is dependent on GEF activity of KALRN. Required for endocytosis of DRD5 upon agonist stimulation but not for basal receptor trafficking. The sequence is that of Sorting nexin-1 (SNX1) from Bos taurus (Bovine).